The primary structure comprises 859 residues: Rab effector MyRIP (859 aa).

Residues 4 to 124 (KLDLSGLTDD…AQSLEWFYNN (121 aa)) enclose the RabBD domain. Residues 63 to 105 (CCMRCCSPFTFLVNTKRQCGDCKFNVCKSCCSYQKHEKAWVCC) form an FYVE-type zinc finger. The segment at 143-560 (RKHRLESGAC…LDTHQVSDDL (418 aa)) is myosin-binding. Residues 193–209 (VALRVAEEAIEEAISKA) form a PKA-binding region. The interval 232–248 (LTEELATTILQKIIRKQ) is negative regulation of PKA-binding. Residues 251–285 (KSEQQVEEEPGWPHPQSCSTKVADEGTSASPGGYR) are disordered. Position 298 is a phosphoserine (Ser-298). Disordered regions lie at residues 302 to 374 (EEAL…KPKS), 386 to 629 (VASA…SQSV), and 783 to 812 (DQKQ…KAEK). A compositionally biased stretch (basic and acidic residues) spans 316–326 (QPRDQGQHPRA). At Ser-350 the chain carries Phosphoserine. Residues 393 to 403 (MGSDSEEDFDW) show a composition bias toward acidic residues. The segment covering 435–450 (PIAASPSSALSPNPEA) has biased composition (low complexity). 2 stretches are compositionally biased toward basic and acidic residues: residues 484-494 (AAEKMRLHGEL) and 607-617 (SEPKTESENQK). Positions 495 to 856 (DVNFNPQLAS…DLMEPALESA (362 aa)) are actin-binding. Polar residues-rich tracts occupy residues 618-629 (ESLSSEDNSQSV) and 787-796 (RTQVQTIDTS).

As to quaternary structure, binds MYO5A, MYO7A and F-actin. Binds RAB27A that has been activated by GTP-binding via its N-terminus. Interacts with PRKAR2A. Interacts with components of the exocyst complex, including EXOC3 and EXOC4. Detected in brain, skin, heart, adrenal medulla, pancreas, intestine, liver, kidney, muscle and testis.

It localises to the cytoplasm. The protein resides in the perinuclear region. The protein localises to the cytoplasmic vesicle. Its subcellular location is the secretory vesicle. Rab effector protein involved in melanosome transport. Serves as link between melanosome-bound RAB27A and the motor proteins MYO5A and MYO7A. May link RAB27A-containing vesicles to actin filaments. Functions as a protein kinase A-anchoring protein (AKAP). May act as a scaffolding protein that links PKA to components of the exocytosis machinery, thus facilitating exocytosis, including insulin release. This Homo sapiens (Human) protein is Rab effector MyRIP (MYRIP).